The chain runs to 378 residues: Probable 3-hydroxyisobutyryl-CoA hydrolase 3 (378 aa).

2 residues coordinate substrate: Glu-138 and Asp-146.

It belongs to the enoyl-CoA hydratase/isomerase family.

Its subcellular location is the peroxisome. The catalysed reaction is 3-hydroxy-2-methylpropanoyl-CoA + H2O = 3-hydroxy-2-methylpropanoate + CoA + H(+). Its pathway is amino-acid degradation; L-valine degradation. In terms of biological role, involved in valine catabolism. This Arabidopsis thaliana (Mouse-ear cress) protein is Probable 3-hydroxyisobutyryl-CoA hydrolase 3.